A 551-amino-acid polypeptide reads, in one-letter code: MENRSSSGTPRPSAGSPDAAKRPSETSPAAGRIPAGQNGSSGDKKRKVTEEGEASEKSEPPADRPMSKRKRMEERHQKLRKRGRTPPSAYSRRDAEAAPVPNRNRDDPANRSLSPLPHRSPTPEEQPRQRKRPGGGARMGLVDRETLRRRQEERERALVEEAMRTSQGRGVTDVVRQHYNAVPQRGREWRKTESKIKGLRSFNNWIKSTLIQKFSPDEEFLARLNDGRDWADDSGPPPAEEKRLLVVDLGCGKGGDLGKWQLAPQPVELYVGLDPAEVSIVQARERYNSMKSGRGNRGRRNPLFHGEFAPKDCFGEWLGDIGIVQQVGIDPNAGPGGSVMSSRWGGGGFDVVASMFAIHYAFESEEKARQMLRNVAGCLKKGGRFLGVCPNSDIISARVVELNAKRKAREEQEKKEKSDEAPEDGEVEEDTKLEWGNSIYRVQFPGKTPEDGIFRPPFGWKYSYFMEEAVEEVPEYVVPWEAFRALTEDYNLELQYRKPFLGIWGDEKDDRELGPLSERMGVRDRNTGELLMTEEEKEAANFYHAFCFYKV.

The segment covering 1 to 10 has biased composition (polar residues); the sequence is MENRSSSGTP. Positions 1–152 are disordered; sequence MENRSSSGTP…DRETLRRRQE (152 aa). Composition is skewed to basic and acidic residues over residues 48-76 and 141-152; these read VTEE…EERH and LVDRETLRRRQE. The mRNA cap 0 methyltransferase domain maps to 194-551; sequence SKIKGLRSFN…FYHAFCFYKV (358 aa). Residue 203–204 participates in mRNA binding; sequence NN. Residues K207, G250, D274, D312, 355-357, and Y360 contribute to the S-adenosyl-L-methionine site; that span reads MFA. Residues 407–430 are disordered; that stretch reads KAREEQEKKEKSDEAPEDGEVEED. Residues 408 to 420 are compositionally biased toward basic and acidic residues; that stretch reads AREEQEKKEKSDE. Positions 421–430 are enriched in acidic residues; sequence APEDGEVEED.

It belongs to the class I-like SAM-binding methyltransferase superfamily. mRNA cap 0 methyltransferase family.

It localises to the nucleus. It catalyses the reaction a 5'-end (5'-triphosphoguanosine)-ribonucleoside in mRNA + S-adenosyl-L-methionine = a 5'-end (N(7)-methyl 5'-triphosphoguanosine)-ribonucleoside in mRNA + S-adenosyl-L-homocysteine. Responsible for methylating the 5'-cap structure of mRNAs. This chain is mRNA cap guanine-N(7) methyltransferase (abd1), found in Aspergillus clavatus (strain ATCC 1007 / CBS 513.65 / DSM 816 / NCTC 3887 / NRRL 1 / QM 1276 / 107).